A 1032-amino-acid chain; its full sequence is Integrin alpha-4 (1032 aa).

The N-terminal stretch at 1–34 is a signal peptide; the sequence is MIRDLGKVGKVSLLLDHIWTGILLYTVILTPADC. The Extracellular segment spans residues 35 to 974; sequence YNIDESSPML…LHNLKPKKHV (940 aa). 7 FG-GAP repeats span residues 36–100, 113–177, 186–237, 238–291, 292–351, 353–411, and 415–477; these read NIDE…PNRT, KCGK…TELS, DHVR…TIKS, YVDL…EKQL, TILF…GAME, LKFE…GITP, and QRLQ…LPST. N-linked (GlcNAc...) asparagine glycosylation is found at asparagine 81 and asparagine 98. 3 cysteine pairs are disulfide-bonded: cysteine 91-cysteine 101, cysteine 144-cysteine 165, and cysteine 183-cysteine 198. Asparagine 229 carries N-linked (GlcNAc...) asparagine glycosylation. 14 residues coordinate Ca(2+): aspartate 314, asparagine 316, aspartate 318, leucine 320, aspartate 322, aspartate 376, aspartate 378, aspartate 380, aspartate 384, aspartate 438, aspartate 440, asparagine 442, tyrosine 444, and aspartate 446. The N-linked (GlcNAc...) asparagine glycan is linked to asparagine 479. Cysteine 485 and cysteine 494 form a disulfide bridge. N-linked (GlcNAc...) asparagine glycosylation is found at asparagine 496, asparagine 517, asparagine 537, asparagine 626, and asparagine 660. 2 disulfides stabilise this stretch: cysteine 500–cysteine 556 and cysteine 622–cysteine 627. Cysteine 698 and cysteine 712 are oxidised to a cystine. Residues asparagine 746 and asparagine 857 are each glycosylated (N-linked (GlcNAc...) asparagine). Disulfide bonds link cysteine 853–cysteine 889 and cysteine 896–cysteine 901. The helical transmembrane segment at 975–998 threads the bilayer; that stretch reads IYMIIGISLLLGILLFSLLTYILW. Residues 999 to 1032 lie on the Cytoplasmic side of the membrane; that stretch reads KVGFFRRKYQPIGTEETSRRESWNYLNKDEKEVK. The GFFKR motif motif lies at 1001 to 1005; sequence GFFRR.

This sequence belongs to the integrin alpha chain family. Heterodimer of an alpha and a beta subunit.

Its subcellular location is the membrane. In terms of biological role, fibronectin and V-CAM adhesion receptor. This is Integrin alpha-4 (itga4) from Xenopus laevis (African clawed frog).